The following is a 129-amino-acid chain: Small ribosomal subunit protein uS8 (129 aa).

Belongs to the universal ribosomal protein uS8 family. Part of the 30S ribosomal subunit. Contacts proteins S5 and S12.

In terms of biological role, one of the primary rRNA binding proteins, it binds directly to 16S rRNA central domain where it helps coordinate assembly of the platform of the 30S subunit. This chain is Small ribosomal subunit protein uS8, found in Bdellovibrio bacteriovorus (strain ATCC 15356 / DSM 50701 / NCIMB 9529 / HD100).